The following is a 120-amino-acid chain: Putative pterin-4-alpha-carbinolamine dehydratase (120 aa).

This sequence belongs to the pterin-4-alpha-carbinolamine dehydratase family.

The enzyme catalyses (4aS,6R)-4a-hydroxy-L-erythro-5,6,7,8-tetrahydrobiopterin = (6R)-L-erythro-6,7-dihydrobiopterin + H2O. This is Putative pterin-4-alpha-carbinolamine dehydratase from Saccharomyces cerevisiae (strain ATCC 204508 / S288c) (Baker's yeast).